Consider the following 282-residue polypeptide: Pantothenate synthetase (282 aa).

Position 30–37 (30–37 (MGALHAGH)) interacts with ATP. H37 (proton donor) is an active-site residue. Q61 contacts (R)-pantoate. A beta-alanine-binding site is contributed by Q61. ATP is bound at residue 147–150 (GEKD). Q153 contacts (R)-pantoate. Residues V176 and 184–187 (LSSR) each bind ATP.

This sequence belongs to the pantothenate synthetase family. In terms of assembly, homodimer.

The protein resides in the cytoplasm. The catalysed reaction is (R)-pantoate + beta-alanine + ATP = (R)-pantothenate + AMP + diphosphate + H(+). The protein operates within cofactor biosynthesis; (R)-pantothenate biosynthesis; (R)-pantothenate from (R)-pantoate and beta-alanine: step 1/1. Its function is as follows. Catalyzes the condensation of pantoate with beta-alanine in an ATP-dependent reaction via a pantoyl-adenylate intermediate. In Bacteroides fragilis (strain ATCC 25285 / DSM 2151 / CCUG 4856 / JCM 11019 / LMG 10263 / NCTC 9343 / Onslow / VPI 2553 / EN-2), this protein is Pantothenate synthetase.